A 471-amino-acid polypeptide reads, in one-letter code: MSYPQGYLYQAPGSLALYSCPAYGASALAAPRSEELARSASGSAFSPYPGSAAFTAQAATGFGSPLQYSADAAAAAAGFPSYMGAPYDAHTTGMTGAISYHPYGSAAYPYQLNDPAYRKNATRDATATLKAWLNEHRKNPYPTKGEKIMLAIITKMTLTQVSTWFANARRRLKKENKMTWAPRNKSEDEDEDEGDATRSKDESPDKAQEGTETSAEDEGISLHVDSLTDHSCSAESDGEKLPCRAGDPLCESGSECKDKYDDLEDDEDDDEEGERGLAPPKPVTSSPLTGLEAPLLSPPPEAAPRGGRKTPQGSRTSPGAPPPASKPKLWSLAEIATSDLKQPSLGPGCGPPGLPAAAAPASTGAPPGGSPYPASPLLGRPLYYTSPFYGNYTNYGNLNAALQGQGLLRYNSAAAAPGEALHTAPKAASDAGKAGAHPLESHYRSPGGGYEPKKDASEGCTVVGGGVQPYL.

A DNA-binding region (homeobox; TALE-type) is located at residues 112–175 (LNDPAYRKNA…ANARRRLKKE (64 aa)). 2 disordered regions span residues 176–373 (NKMT…SPYP) and 424–471 (APKA…QPYL). The residue at position 186 (S186) is a Phosphoserine. Basic and acidic residues predominate over residues 195–209 (DATRSKDESPDKAQE). Residues 261 to 273 (DDLEDDEDDDEEG) are compositionally biased toward acidic residues. Over residues 355–367 (PAAAAPASTGAPP) the composition is skewed to low complexity. Gly residues predominate over residues 462–471 (VVGGGVQPYL).

It belongs to the TALE/IRO homeobox family.

The protein localises to the nucleus. The protein is Iroquois-class homeodomain protein IRX-2 (IRX2) of Homo sapiens (Human).